Here is a 171-residue protein sequence, read N- to C-terminus: Adenine phosphoribosyltransferase (171 aa).

Belongs to the purine/pyrimidine phosphoribosyltransferase family. In terms of assembly, homodimer.

The protein resides in the cytoplasm. The enzyme catalyses AMP + diphosphate = 5-phospho-alpha-D-ribose 1-diphosphate + adenine. The protein operates within purine metabolism; AMP biosynthesis via salvage pathway; AMP from adenine: step 1/1. Functionally, catalyzes a salvage reaction resulting in the formation of AMP, that is energically less costly than de novo synthesis. In Nitrosococcus oceani (strain ATCC 19707 / BCRC 17464 / JCM 30415 / NCIMB 11848 / C-107), this protein is Adenine phosphoribosyltransferase.